Here is a 410-residue protein sequence, read N- to C-terminus: Peptidase T (410 aa).

Residue H79 coordinates Zn(2+). D81 is an active-site residue. Position 142 (D142) interacts with Zn(2+). E176 acts as the Proton acceptor in catalysis. Residues E177, D199, and H381 each contribute to the Zn(2+) site.

This sequence belongs to the peptidase M20B family. The cofactor is Zn(2+).

It localises to the cytoplasm. The enzyme catalyses Release of the N-terminal residue from a tripeptide.. In terms of biological role, cleaves the N-terminal amino acid of tripeptides. The polypeptide is Peptidase T (Listeria innocua serovar 6a (strain ATCC BAA-680 / CLIP 11262)).